We begin with the raw amino-acid sequence, 847 residues long: Acyl-homoserine lactone acylase QuiP (847 aa).

The first 26 residues, 1–26 (MASPAFMRFLPRCGAAAAFGTLLGLA), serve as a signal peptide directing secretion. S265 acts as the Nucleophile in catalysis.

Belongs to the peptidase S45 family. In terms of assembly, heterodimer of an alpha subunit and a beta subunit processed from the same precursor.

It localises to the periplasm. The catalysed reaction is an N-acyl-L-homoserine lactone + H2O = L-homoserine lactone + a carboxylate. In terms of biological role, catalyzes the deacylation of acyl-homoserine lactone (AHL or acyl-HSL), releasing homoserine lactone (HSL) and the corresponding fatty acid. Possesses a specificity for the degradation of long-chain acyl-HSLs (side chains of seven or more carbons in length). Appears to be the acyl-HSL acylase that underlies the ability of P.aeruginosa to degrade and utilize certain acyl-HSLs as growth nutrients, including one of its own quorum signals, 3-oxo-C12-HSL. Is thought to have a role in quorum quenching. The polypeptide is Acyl-homoserine lactone acylase QuiP (quiP) (Pseudomonas aeruginosa (strain ATCC 15692 / DSM 22644 / CIP 104116 / JCM 14847 / LMG 12228 / 1C / PRS 101 / PAO1)).